The primary structure comprises 473 residues: Trehalose-6-phosphate synthase (473 aa).

Residue arginine 10 coordinates D-glucose 6-phosphate. Residue 21 to 22 coordinates UDP-alpha-D-glucose; the sequence is GG. Residues tyrosine 76 and aspartate 130 each contribute to the D-glucose 6-phosphate site. 2 residues coordinate UDP-alpha-D-glucose: arginine 262 and lysine 267. Arginine 300 serves as a coordination point for D-glucose 6-phosphate. UDP-alpha-D-glucose is bound by residues phenylalanine 339 and 365-369; that span reads LVAKE.

Belongs to the glycosyltransferase 20 family. In terms of assembly, homotetramer.

It carries out the reaction D-glucose 6-phosphate + UDP-alpha-D-glucose = alpha,alpha-trehalose 6-phosphate + UDP + H(+). The protein operates within glycan biosynthesis; trehalose biosynthesis. Its function is as follows. Probably involved in the osmoprotection via the biosynthesis of trehalose. Catalyzes the transfer of glucose from UDP-alpha-D-glucose (UDP-Glc) to D-glucose 6-phosphate (Glc-6-P) to form trehalose-6-phosphate. Acts with retention of the anomeric configuration of the UDP-sugar donor. The protein is Trehalose-6-phosphate synthase of Citrobacter koseri (strain ATCC BAA-895 / CDC 4225-83 / SGSC4696).